Here is a 406-residue protein sequence, read N- to C-terminus: Ubiquitin-associated domain-containing protein 1 (406 aa).

Positions 14–98 (LRLHICSLDG…LLLVKKRAPP (85 aa)) constitute a Ubiquitin-like domain. Positions 95-122 (RAPPPTPKMAEVSADEKRKQDQKAPDKD) are disordered. Over residues 108–122 (ADEKRKQDQKAPDKD) the composition is skewed to basic and acidic residues. The UBA 1 domain maps to 186 to 231 (EDDEDRVDEVALRQLTEMGFPESRAVKALRLNHMSVTQAMEWLIEH). Over residues 238 to 257 (DAPLPCENSSEAAGGLATGE) the composition is skewed to low complexity. The segment at 238-272 (DAPLPCENSSEAAGGLATGEAETKPTLGAGAEDPK) is disordered. The UBA 2 domain occupies 289-329 (RPDPRAVIALMEMGFDEKEVIDALRVNNNQQDAACEWLLGD). Residues 354-393 (NPVVQLGLTNPKTLLAFEDMLENPLNSTQWMNDPETGPVM) form the STI1 domain.

In terms of assembly, component of the KPC complex.

The protein localises to the cytoplasm. It functions in the pathway protein modification; protein ubiquitination. Functionally, non-catalytic component of the KPC complex, a E3 ubiquitin-protein ligase complex that mediates polyubiquitination of target proteins, such as CDKN1B and NFKB1. Within the KPC complex, UBAC1 acts as an adapter that promotes the transfer of target proteins that have been polyubiquitinated by RNF123/KPC1 to the 26S proteasome. This chain is Ubiquitin-associated domain-containing protein 1 (ubac1), found in Xenopus tropicalis (Western clawed frog).